The sequence spans 99 residues: Protein S100-A11 (99 aa).

N-acetylmethionine is present on methionine 1. A Phosphothreonine modification is found at threonine 8. 2 consecutive EF-hand domains span residues 10 to 47 (RCIE…ELAA) and 53 to 88 (KDPG…LAIA). 8 residues coordinate Ca(2+): asparagine 29, lysine 31, glutamate 36, aspartate 66, aspartate 68, aspartate 70, glutamine 72, and glutamate 77.

It belongs to the S-100 family. In terms of assembly, homodimer; disulfide-linked. In terms of processing, phosphorylation at Thr-8 significantly suppresses homodimerization and promotes association with NCL/nucleolin which induces nuclear translocation.

It localises to the cytoplasm. It is found in the nucleus. Facilitates the differentiation and the cornification of keratinocytes. The sequence is that of Protein S100-A11 (S100A11) from Sus scrofa (Pig).